Reading from the N-terminus, the 34-residue chain is U10-ctenitoxin-Pr1a (34 aa).

Intrachain disulfides connect C2–C15, C9–C20, C14–C31, and C22–C29.

As to expression, expressed by the venom gland.

Its subcellular location is the secreted. Functionally, non-toxic to mice and insects. The sequence is that of U10-ctenitoxin-Pr1a from Phoneutria reidyi (Brazilian Amazonian armed spider).